The primary structure comprises 338 residues: Ketol-acid reductoisomerase (NADP(+)) (338 aa).

In terms of domain architecture, KARI N-terminal Rossmann spans 1 to 181 (MKVFYDKDAD…GGGRAGIIET (181 aa)). NADP(+) contacts are provided by residues 24–27 (YGSQ), Arg-47, and Ser-52. Residue His-107 is part of the active site. Gly-133 provides a ligand contact to NADP(+). In terms of domain architecture, KARI C-terminal knotted spans 182–327 (NFREETETDL…AKLRSMMPWI (146 aa)). Asp-190, Glu-194, Glu-226, and Glu-230 together coordinate Mg(2+). Ser-251 contacts substrate.

This sequence belongs to the ketol-acid reductoisomerase family. It depends on Mg(2+) as a cofactor.

It catalyses the reaction (2R)-2,3-dihydroxy-3-methylbutanoate + NADP(+) = (2S)-2-acetolactate + NADPH + H(+). The enzyme catalyses (2R,3R)-2,3-dihydroxy-3-methylpentanoate + NADP(+) = (S)-2-ethyl-2-hydroxy-3-oxobutanoate + NADPH + H(+). The protein operates within amino-acid biosynthesis; L-isoleucine biosynthesis; L-isoleucine from 2-oxobutanoate: step 2/4. Its pathway is amino-acid biosynthesis; L-valine biosynthesis; L-valine from pyruvate: step 2/4. Involved in the biosynthesis of branched-chain amino acids (BCAA). Catalyzes an alkyl-migration followed by a ketol-acid reduction of (S)-2-acetolactate (S2AL) to yield (R)-2,3-dihydroxy-isovalerate. In the isomerase reaction, S2AL is rearranged via a Mg-dependent methyl migration to produce 3-hydroxy-3-methyl-2-ketobutyrate (HMKB). In the reductase reaction, this 2-ketoacid undergoes a metal-dependent reduction by NADPH to yield (R)-2,3-dihydroxy-isovalerate. The protein is Ketol-acid reductoisomerase (NADP(+)) of Paraburkholderia phytofirmans (strain DSM 17436 / LMG 22146 / PsJN) (Burkholderia phytofirmans).